The following is an 85-amino-acid chain: U4-theraphotoxin-Hhn1a (85 aa).

The N-terminal stretch at 1-22 (MKVTLIAILTCAAVLVLHTTAA) is a signal peptide. Residues 23–48 (EEFEAESQLMEVGMPDTELAAVDEER) constitute a propeptide that is removed on maturation. Disulfide bonds link Cys-52–Cys-66, Cys-56–Cys-77, and Cys-71–Cys-82.

Belongs to the neurotoxin 12 (Hwtx-2) family. 02 (Hwtx-2) subfamily. In terms of assembly, monomer. Expressed by the venom gland.

Its subcellular location is the secreted. Functionally, neurotoxin active on both insects and mammals. The sequence is that of U4-theraphotoxin-Hhn1a from Cyriopagopus hainanus (Chinese bird spider).